The chain runs to 366 residues: Cell division protein FtsY homolog, chloroplastic (366 aa).

A chloroplast-targeting transit peptide spans 1–40 (MATSSAHLSFLAGRISPFSSERIGLFPLRGEFRPRMTRFR). GTP contacts are provided by residues 171–178 (GVNGGGKT), 254–258 (DTSGR), and 318–321 (TKLD).

It belongs to the GTP-binding SRP family. In terms of assembly, monomer. Interacts with FFC/cpSRP54, a component of the cpSRP complex, composed of a FFC/cpSRP54 monomer and a CAO/cpSRP43 dimer. The complex with FFC/cpSRP54 is formed when both proteins are bound with GTP. As to expression, expressed in green tissues. Low levels in roots and seeds.

Its subcellular location is the plastid. It localises to the chloroplast stroma. The protein resides in the chloroplast thylakoid membrane. Its function is as follows. Signal recognition particle receptor protein. Binds GTP specifically. The GTPase activity is inhibited by the N-terminus of the protein until binding to the thylakoid membrane. Activates the GTPase activity of FFC/cpSRP54 when bound to the cpSRP complex. Required for light-harvesting chlorophyll a/b-binding protein (LHCP) integration into thylakoids. Might be also functionally linked to the Sec translocation machinery. The chain is Cell division protein FtsY homolog, chloroplastic (CPFTSY) from Arabidopsis thaliana (Mouse-ear cress).